The following is a 437-amino-acid chain: GTPase Obg (437 aa).

An Obg domain is found at 2-160 (SMFLDTAKIS…RELQLELKIL (159 aa)). Residues 127–146 (GNIRFATPRNPAPEIAENGE) are disordered. The OBG-type G domain maps to 161-338 (ADVGLVGFPS…LLEATAELLD (178 aa)). Residues 167 to 174 (GFPSVGKS), 192 to 196 (FTTIV), 214 to 217 (DLPG), 284 to 287 (NKMD), and 319 to 321 (SSL) each bind GTP. The Mg(2+) site is built by S174 and T194. Positions 359–437 (GFNEEERPFE…IGNFEFEFVD (79 aa)) constitute an OCT domain.

It belongs to the TRAFAC class OBG-HflX-like GTPase superfamily. OBG GTPase family. As to quaternary structure, monomer. Mg(2+) is required as a cofactor.

It localises to the cytoplasm. Its function is as follows. An essential GTPase which binds GTP, GDP and possibly (p)ppGpp with moderate affinity, with high nucleotide exchange rates and a fairly low GTP hydrolysis rate. Plays a role in control of the cell cycle, stress response, ribosome biogenesis and in those bacteria that undergo differentiation, in morphogenesis control. In Streptococcus thermophilus (strain ATCC BAA-491 / LMD-9), this protein is GTPase Obg.